We begin with the raw amino-acid sequence, 35 residues long: Turripeptide gsp9a (35 aa).

A 4-hydroxyproline mark is found at Pro3 and Pro4. Disulfide bonds link Cys7/Cys22, Cys12/Cys26, and Cys18/Cys33. 4-carboxyglutamate occurs at positions 14 and 17.

Expressed by the venom duct.

The protein localises to the secreted. The polypeptide is Turripeptide gsp9a (Gemmula speciosa (Splendid gem-turris)).